The primary structure comprises 162 residues: Zinc finger protein 593 homolog (162 aa).

Residues 59–83 form a C2H2-type zinc finger; the sequence is FYCVHCAKYFIDDTAMQAHFRTKVH. Positions 110–162 are disordered; that stretch reads VKPKKRAMETQPSKEDVVAGKRIRVEVVPEDTDATDSPSTSKTKRKKVEKMET. Basic and acidic residues predominate over residues 115–136; it reads RAMETQPSKEDVVAGKRIRVEV. Residues 151 to 162 show a composition bias toward basic residues; sequence KTKRKKVEKMET.

The protein belongs to the ZNF593/BUD20 C2H2-type zinc-finger protein family. Associates with pre-60S ribosomal particles; released from the pre-60S particle very early in the cytoplasm.

The protein resides in the nucleus. Its subcellular location is the cytoplasm. Its function is as follows. Involved in pre-60S ribosomal particles maturation by promoting the nuclear export of the 60S ribosome. The polypeptide is Zinc finger protein 593 homolog (Drosophila melanogaster (Fruit fly)).